An 806-amino-acid polypeptide reads, in one-letter code: MEYGKVIFLFLLFLKSGQGESLENYIKTEGASLSNSQKKQFVASSTEECEALCEKETEFVCRSFEHYNKEQKCVIMSENSKTSSVERKRDVVLFEKRIYLSDCKSGNGRNYRGTLSKTKSGITCQKWSDLSPHVPNYAPSKYPDAGLEKNYCRNPDDDVKGPWCYTTNPDIRYEYCDVPECEDECMHCSGENYRGTISKTESGIECQPWDSQEPHSHEYIPSKFPSKDLKENYCRNPDGEPRPWCFTSNPEKRWEFCNIPRCSSPPPPPGPMLQCLKGRGENYRGKIAVTKSGHTCQRWNKQTPHKHNRTPENFPCRGLDENYCRNPDGELEPWCYTTNPDVRQEYCAIPSCGTSSPHTDRVEQSPVIQECYEGKGENYRGTTSTTISGKKCQAWSSMTPHQHKKTPDNFPNADLIRNYCRNPDGDKSPWCYTMDPTVRWEFCNLEKCSGTGSTVLNAQTTRVPSVDTTSHPESDCMYGSGKDYRGKRSTTVTGTLCQAWTAQEPHRHTIFTPDTYPRAGLEENYCRNPDGDPNGPWCYTTNPKKLFDYCDIPQCVSPSSFDCGKPRVEPQKCPGRIVGGCYAQPHSWPWQISLRTRFGEHFCGGTLIAPQWVLTAAHCLERSQWPGAYKVILGLHREVNPESYSQEIGVSRLFKGPLAADIALLKLNRPAAINDKVIPACLPSQDFMVPDRTLCHVTGWGDTQGTSPRGLLKQASLPVIDNRVCNRHEYLNGRVKSTELCAGHLVGRGDSCQGDSGGPLICFEDDKYVLQGVTSWGLGCARPNKPGVYVRVSRYISWIEDVMKNN.

Positions 1 to 19 (MEYGKVIFLFLLFLKSGQG) are cleaved as a signal peptide. Positions 20 to 98 (ESLENYIKTE…RDVVLFEKRI (79 aa)) constitute a PAN domain. Disulfide bonds link Cys49–Cys73, Cys53–Cys61, Cys103–Cys181, Cys124–Cys164, Cys152–Cys176, Cys185–Cys262, Cys188–Cys316, Cys206–Cys245, Cys234–Cys257, Cys275–Cys352, Cys296–Cys335, Cys324–Cys347, Cys371–Cys448, Cys392–Cys431, Cys420–Cys443, Cys476–Cys555, Cys497–Cys538, Cys526–Cys550, Cys563–Cys681, Cys573–Cys581, and Cys603–Cys619. 5 Kringle domains span residues 102–181 (DCKS…VPEC), 184–262 (ECMH…IPRC), 274–352 (QCLK…IPSC), 370–448 (ECYE…LEKC), and 475–555 (DCMY…IPQC). The Peptidase S1 domain occupies 577-804 (IVGGCYAQPH…YISWIEDVMK (228 aa)). A Phosphoserine modification is found at Ser593. Active-site charge relay system residues include His618 and Asp661. Phosphoserine is present on Ser684. Intrachain disulfides connect Cys695–Cys762, Cys725–Cys741, and Cys752–Cys780. The Charge relay system role is filled by Ser756.

The protein belongs to the peptidase S1 family. Plasminogen subfamily. Interacts with CSPG4 and AMOT. Interacts (via the Kringle domains) with HRG; the interaction tethers PLG to the cell surface and enhances its activation. Interacts (via Kringle 4 domain) with ADA; the interaction stimulates PLG activation when in complex with DPP4. Angiostatin: Interacts with ATP5F1A; the interaction inhibits most of the angiogenic effects of angiostatin. In the presence of the inhibitor, the activation involves only cleavage after Arg-576, yielding two chains held together by two disulfide bonds. In the absence of the inhibitor, the activation involves additionally the removal of the activation peptide.

It localises to the secreted. It carries out the reaction Preferential cleavage: Lys-|-Xaa &gt; Arg-|-Xaa, higher selectivity than trypsin. Converts fibrin into soluble products.. Its activity is regulated as follows. Converted into plasmin by plasminogen activators, both plasminogen and its activator being bound to fibrin. Activated with catalytic amounts of streptokinase. Functionally, plasmin dissolves the fibrin of blood clots and acts as a proteolytic factor in a variety of other processes including embryonic development, tissue remodeling, tumor invasion, and inflammation. In ovulation, weakens the walls of the Graafian follicle. It activates the urokinase-type plasminogen activator, collagenases and several complement zymogens, such as C1, C4 and C5. Cleavage of fibronectin and laminin leads to cell detachment and apoptosis. Also cleaves fibrin, thrombospondin and von Willebrand factor. Its role in tissue remodeling and tumor invasion may be modulated by CSPG4. Binds to cells. The polypeptide is Plasminogen (PLG) (Notamacropus eugenii (Tammar wallaby)).